The sequence spans 80 residues: Kappa-actitoxin-Avd4i (80 aa).

The signal sequence occupies residues 1-19; it reads MNKALFLCLVVLCAAVVFA. Residues 20-31 constitute a propeptide that is removed on maturation; sequence AEDLQKAKHAPF. 3 cysteine pairs are disulfide-bonded: C41/C76, C43/C69, and C59/C77.

It belongs to the sea anemone type 3 (BDS) potassium channel toxin family. In terms of tissue distribution, weakly expressed in the ectodermal tissue from the distal and proximal tentacles, body wall, and oral disk.

It is found in the secreted. It localises to the nematocyst. Blocks Kv3 voltage-gated potassium channels. Reduces blood pressure. This Anemonia viridis (Snakelocks anemone) protein is Kappa-actitoxin-Avd4i.